The primary structure comprises 87 residues: Putative defensin-like protein 169 (87 aa).

The first 21 residues, 1–21 (MKKTFSFTVLILFVIPLLVTG), serve as a signal peptide directing secretion. Disulfide bonds link Cys-36–Cys-86, Cys-48–Cys-74, Cys-53–Cys-80, and Cys-57–Cys-82.

It belongs to the DEFL family.

The protein localises to the secreted. The polypeptide is Putative defensin-like protein 169 (Arabidopsis thaliana (Mouse-ear cress)).